The sequence spans 227 residues: Transcription elongation factor A protein-like 2 (227 aa).

2 disordered regions span residues 1-145 and 202-227; these read MEKL…TNKG and FYPR…IPYV. Composition is skewed to basic and acidic residues over residues 18–43, 50–82, 90–113, 120–136, and 206–227; these read IDNE…KLEN, TGKR…KGKS, TEGK…REPE, SETR…DIPR, and GPRE…IPYV.

Belongs to the TFS-II family. TFA subfamily.

It localises to the nucleus. Its function is as follows. May be involved in transcriptional regulation. This chain is Transcription elongation factor A protein-like 2 (TCEAL2), found in Homo sapiens (Human).